The following is a 518-amino-acid chain: Glutamate--cysteine ligase (518 aa).

Belongs to the glutamate--cysteine ligase type 1 family. Type 1 subfamily.

The catalysed reaction is L-cysteine + L-glutamate + ATP = gamma-L-glutamyl-L-cysteine + ADP + phosphate + H(+). It participates in sulfur metabolism; glutathione biosynthesis; glutathione from L-cysteine and L-glutamate: step 1/2. This is Glutamate--cysteine ligase from Salmonella typhi.